Consider the following 108-residue polypeptide: UPF0060 membrane protein Ent638_1931 (108 aa).

4 helical membrane passes run 6–26 (LLFF…WLWL), 29–49 (GASV…VWLL), 61–81 (AAYG…VDGV), and 85–105 (AYDW…VAGW).

Belongs to the UPF0060 family.

Its subcellular location is the cell inner membrane. This is UPF0060 membrane protein Ent638_1931 from Enterobacter sp. (strain 638).